Consider the following 417-residue polypeptide: NADH-quinone oxidoreductase subunit D (417 aa).

Belongs to the complex I 49 kDa subunit family. As to quaternary structure, NDH-1 is composed of 14 different subunits. Subunits NuoB, C, D, E, F, and G constitute the peripheral sector of the complex.

The protein localises to the cell inner membrane. The catalysed reaction is a quinone + NADH + 5 H(+)(in) = a quinol + NAD(+) + 4 H(+)(out). Its function is as follows. NDH-1 shuttles electrons from NADH, via FMN and iron-sulfur (Fe-S) centers, to quinones in the respiratory chain. The immediate electron acceptor for the enzyme in this species is believed to be ubiquinone. Couples the redox reaction to proton translocation (for every two electrons transferred, four hydrogen ions are translocated across the cytoplasmic membrane), and thus conserves the redox energy in a proton gradient. This Paraburkholderia xenovorans (strain LB400) protein is NADH-quinone oxidoreductase subunit D.